A 141-amino-acid chain; its full sequence is Large ribosomal subunit protein uL11 (141 aa).

Belongs to the universal ribosomal protein uL11 family. Part of the ribosomal stalk of the 50S ribosomal subunit. Interacts with L10 and the large rRNA to form the base of the stalk. L10 forms an elongated spine to which L12 dimers bind in a sequential fashion forming a multimeric L10(L12)X complex. Post-translationally, one or more lysine residues are methylated.

Forms part of the ribosomal stalk which helps the ribosome interact with GTP-bound translation factors. The protein is Large ribosomal subunit protein uL11 of Prochlorococcus marinus (strain MIT 9313).